The sequence spans 538 residues: Diacylglycerol O-acyltransferase 1-1 (538 aa).

Disordered regions lie at residues 1–39 (MVGS…GAIV) and 54–106 (AAAA…GGGR). Low complexity predominate over residues 69–83 (EAASGEPSSSSSSSP). 7 helical membrane-spanning segments follow: residues 136-156 (AIFK…LVAV), 186-206 (WPLL…FAVE), 218-238 (VATC…VLVI), 245-265 (VLSG…LVSF), 293-313 (NLQP…TLCY), 326-346 (GWLI…GFII), and 382-402 (LWLC…AEIL). The FYXDWWN motif motif lies at 409-415 (FYKDWWN). 3 helical membrane passes run 451 to 471 (VAVL…VAVP), 474 to 494 (ILKF…VLTA), and 505 to 525 (VGNM…CLLL). His-464 is a catalytic residue.

This sequence belongs to the membrane-bound acyltransferase family. Sterol o-acyltransferase subfamily.

It is found in the endoplasmic reticulum membrane. The enzyme catalyses an acyl-CoA + a 1,2-diacyl-sn-glycerol = a triacyl-sn-glycerol + CoA. It functions in the pathway glycerolipid metabolism; triacylglycerol biosynthesis. Functionally, involved in triacylglycerol (TAG) synthesis. Catalyzes the acylation of the sn-3 hydroxy group of sn-1,2-diacylglycerol using acyl-CoA. This Oryza sativa subsp. japonica (Rice) protein is Diacylglycerol O-acyltransferase 1-1.